A 300-amino-acid polypeptide reads, in one-letter code: Protein TRACHEARY ELEMENT DIFFERENTIATION-RELATED 7A (300 aa).

Positions 1 to 181 are disordered; that stretch reads MASPLSQSVF…HIIPPPPPSP (181 aa). Topologically, residues 1 to 187 are extracellular; that stretch reads MASPLSQSVF…PPSPSNHSTT (187 aa). A compositionally biased stretch (pro residues) spans 12 to 181; the sequence is HFPPPSPAAT…HIIPPPPPSP (170 aa). A glycan (N-linked (GlcNAc...) asparagine) is linked at asparagine 183. The helical transmembrane segment at 188-208 threads the bilayer; that stretch reads IVVIFVSCGGVFFLAFAMAAL. Topologically, residues 209 to 300 are cytoplasmic; it reads WCFLKKKKKK…SSFGHHYLHG (92 aa).

Accumulates in cells differentiating into tracheary element (TE) which undergo secondary cell wall (SCW) formation.

Its subcellular location is the cell membrane. The protein localises to the secreted. The protein resides in the cell wall. Involved in the secondary cell wall (SCW) formation of vessel elements (e.g. protoxylem and metaxylem), thus promoting tracheary element (TE) differentiation. The protein is Protein TRACHEARY ELEMENT DIFFERENTIATION-RELATED 7A of Zinnia elegans (Garden zinnia).